Consider the following 2742-residue polypeptide: Polycystin-1-like protein 1 (2742 aa).

Residues 1-1602 (MFCLWIFSLA…LDQFLSVSRD (1602 aa)) are Extracellular-facing. Residues Asn-35, Asn-133, Asn-149, Asn-220, and Asn-267 are each glycosylated (N-linked (GlcNAc...) asparagine). PKD domains follow at residues 286–372 (AVRI…VKLN) and 370–454 (KLNR…PCQP). 7 N-linked (GlcNAc...) asparagine glycosylation sites follow: Asn-383, Asn-397, Asn-486, Asn-545, Asn-693, Asn-709, and Asn-735. The REJ domain maps to 452 to 1338 (CQPPPVKNLG…ITFFLPASLI (887 aa)). Disordered stretches follow at residues 767–829 (SPSR…QSDP) and 846–908 (DLRG…RPSV). Polar residues predominate over residues 779-799 (SELTDSPVSSVTVGFSGSESF). Positions 880–893 (SFPSDSDSFSHSSS) are enriched in low complexity. N-linked (GlcNAc...) asparagine glycosylation is found at Asn-1080, Asn-1101, Asn-1201, Asn-1318, Asn-1437, Asn-1490, and Asn-1568. A GAIN-B domain is found at 1436–1587 (HNFSITQEHL…KVLQQQIQSS (152 aa)). Cystine bridges form between Cys-1541-Cys-1569 and Cys-1556-Cys-1571. The segment at 1541–1587 (CLSWEDQQGSWTQNGCRAQTNDKTSAVNCSCHHLKPLKVLQQQIQSS) is GPS. Residues 1603-1623 (LTVVFVLLLCVSLNIPVLVWC) form a helical membrane-spanning segment. Residues 1624 to 1812 (KKTDATSEEN…SPHLFTRAQR (189 aa)) are Cytoplasmic-facing. Residues 1648–1769 (HFYAVTVHTG…GDGQVERMLR (122 aa)) form the PLAT domain. A helical transmembrane segment spans residues 1813-1833 (LCVCLLLFLGYACVNIIITHQ). Residues 1834-1851 (RDDQLPFDLGVIDVTSVS) lie on the Extracellular side of the membrane. The helical transmembrane segment at 1852-1872 (IATGLVSVVAVLPVAMVISFL) threads the bilayer. Residues 1873-2005 (FRVKSGRMTL…YRLASLLYHC (133 aa)) are Cytoplasmic-facing. A helical membrane pass occupies residues 2006–2026 (VAWTLCLLFCLSCLILSAVLG). Residues 2027 to 2040 (TRLNSGKILHWIHS) are Extracellular-facing. Residues 2041-2061 (LFVSLTFCFFVIHPATILVLA) traverse the membrane as a helical segment. The Cytoplasmic portion of the chain corresponds to 2062–2151 (AVVSWRFKRS…KQAVIHKMLR (90 aa)). A helical membrane pass occupies residues 2152–2172 (DLCLCGSMFFLMVCITYGSPV). At 2173–2344 (DEHYPLNAAF…QSVRLYHSPS (172 aa)) the chain is on the extracellular side. N-linked (GlcNAc...) asparagine glycosylation occurs at Asn-2218. Residues 2345–2365 (MLDYTVMVWQLLFLLLSLVNL) traverse the membrane as a helical segment. Topologically, residues 2366–2378 (YHQTSTAAQHGLM) are cytoplasmic. Residues 2379-2401 (GYWKTTSISVEVSLVIVSLVYYV) form a helical membrane-spanning segment. Residues 2402–2442 (HYVYHPTMVMEVAEQLRRNHREHVDVSTLANSEQFSRTLRG) are Extracellular-facing. Residues 2443–2463 (IILFLLAVKCVTVVRLNRILA) form a helical membrane-spanning segment. Topologically, residues 2464-2467 (PSMP) are cytoplasmic. Residues 2468 to 2488 (LLSLSSLLWPAISGLLLLSIF) traverse the membrane as a helical segment. Topologically, residues 2489–2528 (SCMGRLLYIERTFHSIQTVLWHFWSLRKSRDLISLWRDFY) are extracellular. Residues 2529 to 2549 (YFGLLYASSAMLTTMVFAVMI) form a helical membrane-spanning segment. The Cytoplasmic segment spans residues 2550–2742 (RKAKRSPSTK…LVHHEQGTKN (193 aa)).

The protein belongs to the polycystin family. As to quaternary structure, heterodimer. Interacts with pkd2 to form a calcium channel. Interacts with pkd2l1 to form ciliary calcium channel. In terms of tissue distribution, expressed in Kupffer's vesicle, an organ equivalent to the node.

The protein localises to the cell projection. It localises to the cilium membrane. Component of a calcium-permeant ion channel formed by PKD1L2 and PKD1L1 in primary cilia, where it controls cilium calcium concentration, without affecting cytoplasmic calcium concentration, and regulates sonic hedgehog/SHH signaling and GLI2 transcription. The PKD1L1:PKD2L1 channel complex is mechanosensitive only at high pressures and is highly temperature sensitive. Also involved in left/right axis specification downstream of nodal flow by forming a complex with PKD2 in cilia to facilitate flow detection in left/right patterning. This Oryzias latipes (Japanese rice fish) protein is Polycystin-1-like protein 1.